The primary structure comprises 593 residues: MVNDASSISRSGYTQNPRLAEAAFEGVRKNTDFLKAADKAFKDVVATKAGDLKAGTKSGESAINTVGLKPPTDAAREKLSSEGQLTLLLGKLMTLLGDVSLSQLESRLAVWQAMIESQKEMGIQVSKEFQTALGEAQEATDLYEASIKKTDTAKSVYDAAAKKLTQAQNKLQSLDPADPGYAQAEAAVEQAGKEATEAKEALDKATDATVKAGTDAKAKAEKADNILTKFQGTANAASQNQVSQGEQDNLSNVARLTMLMAMFIEIVGKNTEESLQNDLALFNALQEGRQAEMEKKSAEFQEETRKAEETNRIMGCIGKVLGALLTIVSVVAAVFTGGASLALAAVGLAVMVADEIVKAATGVSFIQQALNPIMEHVLKPLMELIGKAITKALEGLGVDKKTAEMAGSIVGAIVAAIAMVAVIVVVAVVGKGAAAKLGNALSKMMGETIKKLVPNVLKQLAQNGSKLFTQGMQRITSGLGNVGSKMGLQTNALSKELVGNTLNKVALGMEVTNTAAQSAGGVAEGVFIKNASEALADFMLARFAMDQIQQWLKQSVEIFGENQKVTAELQKAMSSAVQQNADASRFILRQSRA.

Coiled coils occupy residues 151-208 and 287-314; these read DTAK…ATDA and EGRQAEMEKKSAEFQEETRKAEETNRIM. Transmembrane regions (helical) follow at residues 330–350 and 409–429; these read VVAAVFTGGASLALAAVGLAV and IVGAIVAAIAMVAVIVVVAVV.

The protein belongs to the SctE/SipB/YopB family. In terms of assembly, the core secretion machinery of the T3SS is composed of approximately 20 different proteins, including cytoplasmic components, a base, an export apparatus and a needle. This subunit is involved in the formation of a pore, called the translocon, in host membrane.

It is found in the secreted. It localises to the host membrane. The protein resides in the host cell. Functionally, component of the type III secretion system 1 (SPI-1 T3SS), also called injectisome, which is used to inject bacterial effector proteins into eukaryotic host cells. SipB/SctE1 and SipC/SctB are inserted into the host membrane where they form a pore and allow the translocation of effector proteins into the cytosol of target cells. Induces macrophage apoptosis either by binding and activating the proapoptotic enzyme caspase-1 (caspase-1 dependent), resulting in the release of interleukin-1 beta active form, or by disrupting mitochondria and inducing autophagy (caspase-1 independent). The former is dependent of its membrane-fusion activity. The protein is SPI-1 type 3 secretion system translocon protein SctE of Salmonella typhi.